Here is a 656-residue protein sequence, read N- to C-terminus: Receptor-type tyrosine-protein phosphatase R (656 aa).

An N-terminal signal peptide occupies residues 1-23; that stretch reads MRRAVGFPALCLLLNLHAAGCFS. Ser23 is a glycosylation site (O-linked (Xyl...) (chondroitin sulfate) serine). The Extracellular segment spans residues 25-225; it reads NNDHFLAIRQ…HEADKIWSKE (201 aa). N-linked (GlcNAc...) asparagine glycosylation occurs at Asn128. Residues 226 to 248 traverse the membrane as a helical segment; that stretch reads GFYAVVIFLSIFIIIVTCLMIIY. Residues 249–656 are Cytoplasmic-facing; sequence RLKERLQLSF…ESRLSPETVQ (408 aa). Residue Ser271 is modified to Phosphoserine. At Ser338 the chain carries Phosphoserine; by PKA. A Tyrosine-protein phosphatase domain is found at 392–646; that stretch reads LQSEFMEIPM…EFVHHALCLF (255 aa). Substrate-binding positions include Asp553, 587–593, and Gln631; that span reads CSAGIGR. The active-site Phosphocysteine intermediate is Cys587.

This sequence belongs to the protein-tyrosine phosphatase family. Receptor class 7 subfamily. As to quaternary structure, interacts with MAPKs. As to expression, widely expressed in the brain, most abundant in cerebellum, midbrain, cerebral cortex and hippocampus. Also expressed in heart and skeletal muscle.

Its subcellular location is the cytoplasm. It is found in the cell membrane. It carries out the reaction O-phospho-L-tyrosyl-[protein] + H2O = L-tyrosyl-[protein] + phosphate. Sequesters mitogen-activated protein kinases (MAPKs) such as MAPK1, MAPK3 and MAPK14 in the cytoplasm in an inactive form. The MAPKs bind to a dephosphorylated kinase interacting motif, phosphorylation of which by the protein kinase A complex releases the MAPKs for activation and translocation into the nucleus. The protein is Receptor-type tyrosine-protein phosphatase R (Ptprr) of Rattus norvegicus (Rat).